We begin with the raw amino-acid sequence, 134 residues long: Cell division protein SepF (134 aa).

It belongs to the SepF family. Homodimer. Interacts with FtsZ.

Its subcellular location is the cytoplasm. In terms of biological role, cell division protein that is part of the divisome complex and is recruited early to the Z-ring. Probably stimulates Z-ring formation, perhaps through the cross-linking of FtsZ protofilaments. Its function overlaps with FtsA. This is Cell division protein SepF from Caldanaerobacter subterraneus subsp. tengcongensis (strain DSM 15242 / JCM 11007 / NBRC 100824 / MB4) (Thermoanaerobacter tengcongensis).